Reading from the N-terminus, the 476-residue chain is Aspartyl/glutamyl-tRNA(Asn/Gln) amidotransferase subunit B (476 aa).

Belongs to the GatB/GatE family. GatB subfamily. As to quaternary structure, heterotrimer of A, B and C subunits.

The enzyme catalyses L-glutamyl-tRNA(Gln) + L-glutamine + ATP + H2O = L-glutaminyl-tRNA(Gln) + L-glutamate + ADP + phosphate + H(+). It catalyses the reaction L-aspartyl-tRNA(Asn) + L-glutamine + ATP + H2O = L-asparaginyl-tRNA(Asn) + L-glutamate + ADP + phosphate + 2 H(+). In terms of biological role, allows the formation of correctly charged Asn-tRNA(Asn) or Gln-tRNA(Gln) through the transamidation of misacylated Asp-tRNA(Asn) or Glu-tRNA(Gln) in organisms which lack either or both of asparaginyl-tRNA or glutaminyl-tRNA synthetases. The reaction takes place in the presence of glutamine and ATP through an activated phospho-Asp-tRNA(Asn) or phospho-Glu-tRNA(Gln). In Shouchella clausii (strain KSM-K16) (Alkalihalobacillus clausii), this protein is Aspartyl/glutamyl-tRNA(Asn/Gln) amidotransferase subunit B.